Reading from the N-terminus, the 191-residue chain is Imidazoleglycerol-phosphate dehydratase (191 aa).

The protein belongs to the imidazoleglycerol-phosphate dehydratase family.

It is found in the cytoplasm. The catalysed reaction is D-erythro-1-(imidazol-4-yl)glycerol 3-phosphate = 3-(imidazol-4-yl)-2-oxopropyl phosphate + H2O. It participates in amino-acid biosynthesis; L-histidine biosynthesis; L-histidine from 5-phospho-alpha-D-ribose 1-diphosphate: step 6/9. This is Imidazoleglycerol-phosphate dehydratase from Methanococcoides burtonii (strain DSM 6242 / NBRC 107633 / OCM 468 / ACE-M).